Reading from the N-terminus, the 177-residue chain is FMRFamide-like neuropeptides 7 (177 aa).

The first 19 residues, 1-19 (MLGSRFLLLALGLLVLVLA), serve as a signal peptide directing secretion. A propeptide spanning residues 20–49 (EESAEQQVQEPTELEKSGEQLSEEDLIDEQ) is cleaved from the precursor. The tract at residues 25–106 (QQVQEPTELE…RSSMVRFGKR (82 aa)) is disordered. F62, F75, F89, F103, F117, and F130 each carry phenylalanine amide. At L143 the chain carries Leucine amide. A Phenylalanine amide modification is found at F157. The propeptide occupies 161–177 (SMEFEMQSNEKNIEDSE).

The protein belongs to the FARP (FMRFamide related peptide) family. As to expression, expressed in the ASI sensory neurons, the ALA interneuron and the AVG interneuron from where secretion occurs. Expression in the ASI neurons is necessary and sufficient to maintain serotonin-induced fat loss.

The protein localises to the secreted. In terms of biological role, FMRFamide-like neuropeptides. Stimulates serotonin-induced fat loss by binding to and activating the npr-22 receptor which leads to induction of the atgl-1 lipase and subsequent fat loss. Together with atfs-1, negatively regulates the expression of the transcription regulator hlh-11, to promote expression of atgl-1, and thus atgl-1-dependent fat oxidation in response to mitochondrial stress. Functionally, TPMQRSSMVRF-amide: Acts as a ligand for the npr-22 receptor in vitro. SPMQRSSMVRF-amide: Acts as a ligand for the npr-22 receptor in vitro. Its function is as follows. Acts as a ligand for the npr-22 receptor in vitro. The polypeptide is FMRFamide-like neuropeptides 7 (Caenorhabditis elegans).